The primary structure comprises 171 residues: MSHNLEEKKAIVAEVSDQIAEAQAIVIAEYRGLGVGQLTQLRVKARESGIYFRVIKNTFVRRAVVDTPFSGLAESMVGPLAYGIGSDPVITAKVLHEFAKDNDRFVIKAGAMAGTVMSGKDVAALAALPSREELLSRLLGTLQAPVAKFVRTLNEVPSKFVRGLAAVCDKK.

The protein belongs to the universal ribosomal protein uL10 family. As to quaternary structure, part of the ribosomal stalk of the 50S ribosomal subunit. The N-terminus interacts with L11 and the large rRNA to form the base of the stalk. The C-terminus forms an elongated spine to which L12 dimers bind in a sequential fashion forming a multimeric L10(L12)X complex.

Forms part of the ribosomal stalk, playing a central role in the interaction of the ribosome with GTP-bound translation factors. The chain is Large ribosomal subunit protein uL10 from Nitrosomonas eutropha (strain DSM 101675 / C91 / Nm57).